We begin with the raw amino-acid sequence, 361 residues long: MALTRLLIKDFRNIESADLALAAGFNFLVGPNGSGKTSVLEAVYTLGHGRAFRSLQAGRVIRHECAEFVLHGRVDANEREASVGLSKSRQGDTKVRIDGTDGHKVAELAQMLPMQLITPEGFTLLNGGPKFRRAFLDWGCFHNEPGFFTAWSNLKRLLKQRNAALRQVSRYTQIRAWDQEIIPLAERISEWRAAYSDAIAADISATCALFLPEFALSFSFQRGWDKESDYGELLERQFERDRALTYTAVGPHKADFRIRADGTPVEDLLSRGQLKLLMCALRLAQGEFLTRQSGRRCLYLLDDFASELDTGRRRLLAERLKATQAQVFVSAVSAEQVADMVGEKGKMFRVEHGKIEVQPQD.

Residue 30–37 coordinates ATP; sequence GPNGSGKT.

It belongs to the RecF family.

The protein resides in the cytoplasm. The RecF protein is involved in DNA metabolism; it is required for DNA replication and normal SOS inducibility. RecF binds preferentially to single-stranded, linear DNA. It also seems to bind ATP. This Yersinia pseudotuberculosis serotype O:1b (strain IP 31758) protein is DNA replication and repair protein RecF.